Consider the following 237-residue polypeptide: Phosphoribosylaminoimidazole-succinocarboxamide synthase (237 aa).

Belongs to the SAICAR synthetase family.

The catalysed reaction is 5-amino-1-(5-phospho-D-ribosyl)imidazole-4-carboxylate + L-aspartate + ATP = (2S)-2-[5-amino-1-(5-phospho-beta-D-ribosyl)imidazole-4-carboxamido]succinate + ADP + phosphate + 2 H(+). The protein operates within purine metabolism; IMP biosynthesis via de novo pathway; 5-amino-1-(5-phospho-D-ribosyl)imidazole-4-carboxamide from 5-amino-1-(5-phospho-D-ribosyl)imidazole-4-carboxylate: step 1/2. The sequence is that of Phosphoribosylaminoimidazole-succinocarboxamide synthase from Idiomarina loihiensis (strain ATCC BAA-735 / DSM 15497 / L2-TR).